The chain runs to 446 residues: Actin-related protein 6 (446 aa).

Residues 1 to 11 (MTGRGGAKKSR) are compositionally biased toward basic residues. A disordered region spans residues 1-24 (MTGRGGAKKSRAAGPAPPTTTLVL).

This sequence belongs to the actin family. ARP6 subfamily. Component of the SWR1 chromatin remodeling complex.

The protein localises to the cytoplasm. The protein resides in the cytoskeleton. It localises to the nucleus. Functionally, component of the SWR1 complex which mediates the ATP-dependent exchange of histone H2A for the H2A variant H2A.Z leading to transcriptional regulation of selected genes by chromatin remodeling. Involved in chromosome stability. The protein is Actin-related protein 6 (arp-6) of Neurospora crassa (strain ATCC 24698 / 74-OR23-1A / CBS 708.71 / DSM 1257 / FGSC 987).